Consider the following 847-residue polypeptide: B-cell receptor CD22 (847 aa).

The first 19 residues, 1-19 (MHLLGPWLLLLVLEYLAFS), serve as a signal peptide directing secretion. An Ig-like V-type domain is found at 20–138 (DSSKWVFEHP…MERIHLNVSE (119 aa)). The Extracellular segment spans residues 20–687 (DSSKWVFEHP…YYSPETIGRR (668 aa)). Intrachain disulfides connect C39–C167, C44–C102, and C161–C219. N-linked (GlcNAc...) asparagine glycans are attached at residues N67, N101, and N112. R120 is an N-acetylneuraminate binding site. Residues N135, N164, and N231 are each glycosylated (N-linked (GlcNAc...) asparagine). 6 consecutive Ig-like C2-type domains span residues 143-235 (PHIQ…DTVQ), 242-326 (PKLE…VFLQ), 331-416 (PEPS…LDVQ), 419-500 (PKKV…VALN), 505-582 (PRDV…QTAS), and 593-676 (PRRL…STLT). Disulfide bonds link C265/C309, C353/C396, C442/C484, and C529/C571. N-linked (GlcNAc...) asparagine glycosylation is found at N363, N445, and N479. N-linked (GlcNAc...) asparagine glycosylation is found at N574 and N634. A disulfide bridge links C616 with C659. Residues 688–706 (VAVGLGSCLAILILAICGL) form a helical membrane-spanning segment. Residues 707–847 (KLQRRWKRTQ…ENVDYVILKH (141 aa)) lie on the Cytoplasmic side of the membrane. S725, S726, and S729 each carry phosphoserine. 2 short sequence motifs (ITIM motif) span residues 760-765 (ISYTTL) and 794-799 (VTYSAL). At Y762 the chain carries Phosphotyrosine. Phosphotyrosine occurs at positions 807, 822, and 842. 2 short sequence motifs (ITIM motif) span residues 820–825 (IHYSEL) and 840–845 (VDYVIL).

It belongs to the immunoglobulin superfamily. SIGLEC (sialic acid binding Ig-like lectin) family. As to quaternary structure, predominantly monomer of isoform CD22-beta. Also found as heterodimer of isoform CD22-beta and a shorter isoform. Interacts with PTPN6/SHP-1, LYN, SYK, PIK3R1/PIK3R2 and PLCG1 upon phosphorylation. Interacts with GRB2, INPP5D and SHC1 upon phosphorylation. May form a complex with INPP5D/SHIP, GRB2 and SHC1. In terms of processing, phosphorylation of Tyr-762, Tyr-807 and Tyr-822 are involved in binding to SYK, GRB2 and SYK, respectively. Phosphorylation of Tyr-842 is involved in binding to SYK, PLCG2 and PIK3R1/PIK3R2. Post-translationally, phosphorylated on tyrosine residues by LYN. In terms of tissue distribution, B-lymphocytes.

It is found in the cell membrane. Most highly expressed siglec (sialic acid-binding immunoglobulin-like lectin) on B-cells that plays a role in various aspects of B-cell biology including differentiation, antigen presentation, and trafficking to bone marrow. Binds to alpha 2,6-linked sialic acid residues of surface molecules such as CD22 itself, CD45 and IgM in a cis configuration. Can also bind to ligands on other cells as an adhesion molecule in a trans configuration. Acts as an inhibitory coreceptor on the surface of B-cells and inhibits B-cell receptor induced signaling, characterized by inhibition of the calcium mobilization and cellular activation. Mechanistically, the immunoreceptor tyrosine-based inhibitory motif domain is phosphorylated by the Src kinase LYN, which in turn leads to the recruitment of the protein tyrosine phosphatase 1/PTPN6, leading to the negative regulation of BCR signaling. If this negative signaling from is of sufficient strength, apoptosis of the B-cell can be induced. This Homo sapiens (Human) protein is B-cell receptor CD22.